A 723-amino-acid polypeptide reads, in one-letter code: Malate synthase G (723 aa).

Acetyl-CoA contacts are provided by residues Val118, 125–126 (RY), Ser274, and Arg311. Catalysis depends on Arg338, which acts as the Proton acceptor. Residues Arg338, Glu427, and 452–455 (GFLD) contribute to the glyoxylate site. Mg(2+) contacts are provided by Glu427 and Asp455. Pro536 lines the acetyl-CoA pocket. Cys617 bears the Cysteine sulfenic acid (-SOH) mark. Asp631 acts as the Proton donor in catalysis. Position 688 is a cysteine sulfenic acid (-SOH) (Cys688).

It belongs to the malate synthase family. GlcB subfamily. As to quaternary structure, monomer. It depends on Mg(2+) as a cofactor.

It localises to the cytoplasm. The catalysed reaction is glyoxylate + acetyl-CoA + H2O = (S)-malate + CoA + H(+). It participates in carbohydrate metabolism; glyoxylate cycle; (S)-malate from isocitrate: step 2/2. Its function is as follows. Involved in the glycolate utilization. Catalyzes the condensation and subsequent hydrolysis of acetyl-coenzyme A (acetyl-CoA) and glyoxylate to form malate and CoA. The protein is Malate synthase G of Shigella flexneri.